Here is a 199-residue protein sequence, read N- to C-terminus: Thymidylate kinase (199 aa).

Residue 7-14 coordinates ATP; it reads GIDGSGKT.

It belongs to the thymidylate kinase family.

The enzyme catalyses dTMP + ATP = dTDP + ADP. Phosphorylation of dTMP to form dTDP in both de novo and salvage pathways of dTTP synthesis. This chain is Thymidylate kinase, found in Tropheryma whipplei (strain Twist) (Whipple's bacillus).